We begin with the raw amino-acid sequence, 186 residues long: Tumor necrosis factor alpha-induced protein 8-like protein 1 (186 aa).

This sequence belongs to the TNFAIP8 family. Interacts with FBXW5; TNFAIP8L1 competes with TSC2 to bind FBXW5 increasing TSC2 stability by preventing its ubiquitination. High expression detected in most carcinoma cell lines, especially in cells transformed with virus genomes.

The protein localises to the cytoplasm. Functionally, acts as a negative regulator of mTOR activity. This is Tumor necrosis factor alpha-induced protein 8-like protein 1 (TNFAIP8L1) from Homo sapiens (Human).